The following is a 516-amino-acid chain: Cytochrome P450 1A2 (516 aa).

Serine 69 carries O-linked (GlcNAc) serine glycosylation. Substrate contacts are provided by residues phenylalanine 226 and aspartate 361 to leucine 365. Residue cysteine 458 participates in heme binding.

This sequence belongs to the cytochrome P450 family. As to quaternary structure, interacts with PGRMC1; the interaction requires PGRMC1 homodimerization. Heme is required as a cofactor.

The protein resides in the endoplasmic reticulum membrane. It is found in the microsome membrane. It carries out the reaction an organic molecule + reduced [NADPH--hemoprotein reductase] + O2 = an alcohol + oxidized [NADPH--hemoprotein reductase] + H2O + H(+). The catalysed reaction is 17beta-estradiol + reduced [NADPH--hemoprotein reductase] + O2 = 2-hydroxy-17beta-estradiol + oxidized [NADPH--hemoprotein reductase] + H2O + H(+). The enzyme catalyses 17beta-estradiol + reduced [NADPH--hemoprotein reductase] + O2 = 4-hydroxy-17beta-estradiol + oxidized [NADPH--hemoprotein reductase] + H2O + H(+). It catalyses the reaction estrone + reduced [NADPH--hemoprotein reductase] + O2 = 2-hydroxyestrone + oxidized [NADPH--hemoprotein reductase] + H2O + H(+). It carries out the reaction estrone + reduced [NADPH--hemoprotein reductase] + O2 = 4-hydroxyestrone + oxidized [NADPH--hemoprotein reductase] + H2O + H(+). The catalysed reaction is cholesterol + reduced [NADPH--hemoprotein reductase] + O2 = 25-hydroxycholesterol + oxidized [NADPH--hemoprotein reductase] + H2O + H(+). The enzyme catalyses all-trans-retinol + reduced [NADPH--hemoprotein reductase] + O2 = all-trans-retinal + oxidized [NADPH--hemoprotein reductase] + 2 H2O + H(+). It catalyses the reaction all-trans-retinal + reduced [NADPH--hemoprotein reductase] + O2 = all-trans-retinoate + oxidized [NADPH--hemoprotein reductase] + H2O + 2 H(+). It carries out the reaction (5Z,8Z,11Z,14Z)-eicosatetraenoate + reduced [NADPH--hemoprotein reductase] + O2 = (14R,15S)-epoxy-(5Z,8Z,11Z)-eicosatrienoate + oxidized [NADPH--hemoprotein reductase] + H2O + H(+). The catalysed reaction is (5Z,8Z,11Z,14Z)-eicosatetraenoate + reduced [NADPH--hemoprotein reductase] + O2 = (14S,15R)-epoxy-(5Z,8Z,11Z)-eicosatrienoate + oxidized [NADPH--hemoprotein reductase] + H2O + H(+). The enzyme catalyses (5Z,8Z,11Z,14Z,17Z)-eicosapentaenoate + reduced [NADPH--hemoprotein reductase] + O2 = (17R,18S)-epoxy-(5Z,8Z,11Z,14Z)-eicosatetraenoate + oxidized [NADPH--hemoprotein reductase] + H2O + H(+). It catalyses the reaction (4Z,7Z,10Z,13Z,16Z,19Z)-docosahexaenoate + reduced [NADPH--hemoprotein reductase] + O2 = (19R,20S)-epoxy-(4Z,7Z,10Z,13Z,16Z)-docosapentaenoate + oxidized [NADPH--hemoprotein reductase] + H2O + H(+). It carries out the reaction (5S)-hydroperoxy-(6E,8Z,11Z,14Z)-eicosatetraenoate = 5-oxo-(6E,8Z,11Z,14Z)-eicosatetraenoate + H2O. The catalysed reaction is (12S)-hydroperoxy-(5Z,8Z,10E,14Z)-eicosatetraenoate = 12-oxo-(5Z,8Z,10E,14Z)-eicosatetraenoate + H2O. The enzyme catalyses (15S)-hydroperoxy-(5Z,8Z,11Z,13E)-eicosatetraenoate = 15-oxo-(5Z,8Z,11Z,13E)-eicosatetraenoate + H2O. It catalyses the reaction (13S)-hydroperoxy-(9Z,11E)-octadecadienoate = 13-oxo-(9Z,11E)-octadecadienoate + H2O. It carries out the reaction (5Z,8Z,11Z,14Z)-eicosatetraenoate + reduced [NADPH--hemoprotein reductase] + O2 = 13-hydroxy-(5Z,8Z,11Z,14Z)-eicosatetraenoate + oxidized [NADPH--hemoprotein reductase] + H2O + H(+). The catalysed reaction is (5Z,8Z,11Z,14Z)-eicosatetraenoate + reduced [NADPH--hemoprotein reductase] + O2 = 19-hydroxy-(5Z,8Z,11Z,14Z)-eicosatetraenoate + oxidized [NADPH--hemoprotein reductase] + H2O + H(+). The enzyme catalyses (9Z,12Z)-octadecadienoate + reduced [NADPH--hemoprotein reductase] + O2 = 11-hydroxy-(9Z,12Z)-octadecadienoate + oxidized [NADPH--hemoprotein reductase] + H2O + H(+). Its pathway is cofactor metabolism; retinol metabolism. The protein operates within steroid metabolism; cholesterol metabolism. It participates in lipid metabolism; arachidonate metabolism. A cytochrome P450 monooxygenase involved in the metabolism of various endogenous substrates, including fatty acids, steroid hormones and vitamins. Mechanistically, uses molecular oxygen inserting one oxygen atom into a substrate, and reducing the second into a water molecule, with two electrons provided by NADPH via cytochrome P450 reductase (NADPH--hemoprotein reductase). Catalyzes the hydroxylation of carbon-hydrogen bonds. Exhibits high catalytic activity for the formation of hydroxyestrogens from estrone (E1) and 17beta-estradiol (E2), namely 2-hydroxy E1 and E2. Metabolizes cholesterol toward 25-hydroxycholesterol, a physiological regulator of cellular cholesterol homeostasis. May act as a major enzyme for all-trans retinoic acid biosynthesis in the liver. Catalyzes two successive oxidative transformation of all-trans retinol to all-trans retinal and then to the active form all-trans retinoic acid. Primarily catalyzes stereoselective epoxidation of the last double bond of polyunsaturated fatty acids (PUFA), displaying a strong preference for the (R,S) stereoisomer. Catalyzes bisallylic hydroxylation and omega-1 hydroxylation of PUFA. May also participate in eicosanoids metabolism by converting hydroperoxide species into oxo metabolites (lipoxygenase-like reaction, NADPH-independent). Plays a role in the oxidative metabolism of xenobiotics. Catalyzes the N-hydroxylation of heterocyclic amines and the O-deethylation of phenacetin. Metabolizes caffeine via N3-demethylation. The protein is Cytochrome P450 1A2 (CYP1A2) of Oryctolagus cuniculus (Rabbit).